The sequence spans 85 residues: Large ribosomal subunit protein bL27 (85 aa).

The protein belongs to the bacterial ribosomal protein bL27 family.

The protein is Large ribosomal subunit protein bL27 of Azobacteroides pseudotrichonymphae genomovar. CFP2.